A 278-amino-acid chain; its full sequence is Tryptophan synthase alpha chain (278 aa).

Active-site proton acceptor residues include Glu-50 and Asp-61.

It belongs to the TrpA family. In terms of assembly, tetramer of two alpha and two beta chains.

The enzyme catalyses (1S,2R)-1-C-(indol-3-yl)glycerol 3-phosphate + L-serine = D-glyceraldehyde 3-phosphate + L-tryptophan + H2O. Its pathway is amino-acid biosynthesis; L-tryptophan biosynthesis; L-tryptophan from chorismate: step 5/5. Functionally, the alpha subunit is responsible for the aldol cleavage of indoleglycerol phosphate to indole and glyceraldehyde 3-phosphate. This chain is Tryptophan synthase alpha chain, found in Rhodopseudomonas palustris (strain HaA2).